Reading from the N-terminus, the 518-residue chain is Vesicular inhibitory amino acid transporter (518 aa).

Over 1–125 (MATLIRSKLS…WNVTNAIQGM (125 aa)) the chain is Cytoplasmic. A helical transmembrane segment spans residues 126 to 146 (FVLGLPYAILHGGYLGLFLII). The Lumenal, vesicle segment spans residues 147 to 197 (FAAVVCCYTGKILIACLYEENEDGETVRVRDSYVDIANACCAPRFPKLGGR). The helical transmembrane segment at 198–218 (VVNVAQIIELVMTCILYVVVS) threads the bilayer. Residues 219–258 (GNLMYNSFPNLPISQKSWSIMATAVLLPCAFLKNLKAVSK) are Cytoplasmic-facing. Residues 259–279 (FSLLCTVAHFVINILVIAYCL) traverse the membrane as a helical segment. The Lumenal, vesicle segment spans residues 280-298 (SRARDWAWDKVKFYIDVKK). A helical membrane pass occupies residues 299-319 (FPISIGIIVFSYTSQIFLPSL). The Cytoplasmic portion of the chain corresponds to 320 to 334 (EGNMQSPREFHCMMN). A helical transmembrane segment spans residues 335–355 (WTHIAACILKGLFALVAYLTW). Topologically, residues 356 to 376 (ADETKEVITDNLPSTIRAVVN) are lumenal, vesicle. The chain crosses the membrane as a helical span at residues 377-397 (LFLVSKALLSYPLPFFAAVEV). Topologically, residues 398 to 431 (LEKSLFQEGARAFFPNCYGGDGRLKSWGLTLRCA) are cytoplasmic. The helical transmembrane segment at 432-452 (LVVFTLLMAIYVPHFALLMGL) threads the bilayer. Over 453–454 (TG) the chain is Lumenal, vesicle. The chain crosses the membrane as a helical span at residues 455-475 (SLTGAGLCFLLPSLFHLKLMW). The Cytoplasmic portion of the chain corresponds to 476 to 482 (RQLLWHQ). The helical transmembrane segment at 483–503 (VFFDVSIFVIGSICSVSGFVH) threads the bilayer. Residues 504 to 518 (SLEGLIEAYAYNIED) lie on the Lumenal, vesicle side of the membrane.

The protein belongs to the amino acid/polyamine transporter 2 family. Initially expressed in late neurula stages in the anterior spinal cord. By early tailbud stages, expression extends posteriorly along the entire developing spinal cord and appears in the hindbrain. In late tailbud embryos, expressed in the forebrain, midbrain, hindbrain, spinal cord and retina. In swimming tadpoles, expressed in an extended and more intense pattern including interneurons.

The protein localises to the cytoplasmic vesicle membrane. The protein resides in the presynapse. The enzyme catalyses 4-aminobutanoate(out) + n H(+)(in) = 4-aminobutanoate(in) + n H(+)(out). The catalysed reaction is glycine(out) + n H(+)(in) = glycine(in) + n H(+)(out). It carries out the reaction beta-alanine(out) + n H(+)(in) = beta-alanine(in) + n H(+)(out). Antiporter that exchanges vesicular protons for cytosolic 4-aminobutanoate or to a lesser extend glycine, thus allowing their secretion from nerve terminals. The transport is equally dependent on the chemical and electrical components of the proton gradient. May also transport beta-alanine. Acidification of GABAergic synaptic vesicles is a prerequisite for 4-aminobutanoate uptake. The chain is Vesicular inhibitory amino acid transporter from Xenopus laevis (African clawed frog).